Consider the following 565-residue polypeptide: Frizzled-2 (565 aa).

The first 23 residues, 1-23 (MRPRSALPRLLLPLLLLPAAGPA), serve as a signal peptide directing secretion. Over 24 to 247 (QFHGEKGISI…QEETRFARLW (224 aa)) the chain is Extracellular. Positions 34 to 153 (PDHGFCQPIS…HGAEQICVGQ (120 aa)) constitute an FZ domain. Intrachain disulfides connect Cys39–Cys100, Cys47–Cys93, Cys84–Cys121, Cys110–Cys150, and Cys114–Cys138. Asn53 carries an N-linked (GlcNAc...) asparagine glycan. N-linked (GlcNAc...) asparagine glycosylation is present at Asn154. The disordered stretch occupies residues 160-189 (APALLTTAPPPGLQPGAGGTPGGPGGGGAP). Residues 174-188 (PGAGGTPGGPGGGGA) show a composition bias toward gly residues. The chain crosses the membrane as a helical span at residues 248–268 (ILTWSVLCCASTFFTVTTYLV). Residues 269-279 (DMQRFRYPERP) are Cytoplasmic-facing. Residues 280 to 300 (IIFLSGCYTMVSVAYIAGFVL) form a helical membrane-spanning segment. At 301–327 (QERVVCNERFSEDGYRTVVQGTKKEGC) the chain is on the extracellular side. A helical transmembrane segment spans residues 328 to 348 (TILFMMLYFFSMASSIWWVIL). Residues 349–370 (SLTWFLAAGMKWGHEAIEANSQ) are Cytoplasmic-facing. Residues 371 to 391 (YFHLAAWAVPAVKTITILAMG) traverse the membrane as a helical segment. The Extracellular segment spans residues 392 to 414 (QIDGDLLSGVCFVGLNSLDPLRG). A helical membrane pass occupies residues 415–435 (FVLAPLFVYLFIGTSFLLAGF). The Cytoplasmic portion of the chain corresponds to 436-461 (VSLFRIRTIMKHDGTKTEKLERLMVR). A helical membrane pass occupies residues 462–482 (IGVFSVLYTVPATIVIACYFY). Residues 483 to 519 (EQAFREHWERSWVSQHCKSLAIPCPAHYTPRMSPDFT) are Extracellular-facing. The chain crosses the membrane as a helical span at residues 520-540 (VYMIKYLMTLIVGITSGFWIW). Residues 541–565 (SGKTLHSWRKFYTRLTNSRHGETTV) are Cytoplasmic-facing. A Lys-Thr-X-X-X-Trp motif, mediates interaction with the PDZ domain of Dvl family members motif is present at residues 543–548 (KTLHSW). The PDZ-binding signature appears at 563–565 (TTV).

This sequence belongs to the G-protein coupled receptor Fz/Smo family. As to quaternary structure, (Microbial infection) Interacts with C.difficile toxin TcdB; frizzled receptors constitute the major host receptors for TcdB in the colonic epithelium. In terms of processing, ubiquitinated by ZNRF3, leading to its degradation by the proteasome. In terms of tissue distribution, widely expressed. In the adult, mainly found in heart, placenta, skeletal muscle, lung, kidney, pancreas, prostate, testis, ovary and colon. In the fetus, expressed in brain, lung and kidney. Low levels in fetal liver.

Its subcellular location is the membrane. It localises to the cell membrane. Receptor for Wnt proteins. Most of frizzled receptors are coupled to the beta-catenin canonical signaling pathway, which leads to the activation of disheveled proteins, inhibition of GSK-3 kinase, nuclear accumulation of beta-catenin and activation of Wnt target genes. A second signaling pathway involving PKC and calcium fluxes has been seen for some family members, but it is not yet clear if it represents a distinct pathway or if it can be integrated in the canonical pathway, as PKC seems to be required for Wnt-mediated inactivation of GSK-3 kinase. Both pathways seem to involve interactions with G-proteins. May be involved in transduction and intercellular transmission of polarity information during tissue morphogenesis and/or in differentiated tissues. Functionally, (Microbial infection) Acts as a receptor for C.difficile toxin TcdB in the colonic epithelium. TcdB occupies the binding site for Wnt-adducted palmitoleate in frizzled receptors and TcdB-binding prevents Wnt-binding and downstream Wnt signaling. The protein is Frizzled-2 (FZD2) of Homo sapiens (Human).